Reading from the N-terminus, the 399-residue chain is Chromosomal replication initiator protein DnaA (399 aa).

A domain I, interacts with DnaA modulators region spans residues 1-64 (MELNALIKKI…EEEVRKLIEV (64 aa)). Residues 64-77 (VKEKEEKKKVEIKD) are domain II. The tract at residues 78-290 (FLNPKYTLEN…GKIKLIKLKG (213 aa)) is domain III, AAA+ region. ADP contacts are provided by Ile-89, Asn-94, Gly-122, Thr-123, Gly-124, Lys-125, Thr-126, and His-127. Ile-89 contacts ATP. Position 122 (Gly-122) interacts with ATP. Positions 124, 125, 126, and 127 each coordinate ATP. Thr-126 lines the Mg(2+) pocket. Val-156 lines the ssDNA pocket. ATP is bound at residue Asp-180. Asp-181 is a binding site for Mg(2+). 3 residues coordinate ssDNA: Lys-188, Arg-190, and Thr-191. Arg-277 serves as a coordination point for ATP. The tract at residues 291–399 (FEGLERKERK…LEKQAFDKIC (109 aa)) is domain IV, binds dsDNA.

This sequence belongs to the DnaA family. In terms of assembly, in the presence of ATP analog AMP-PCP forms a linear, right-handed spiral filament with 4 subunits arranged head-to-tail, about 122 Angstroms wide and about 360 Angstroms long. Mg(2+)-AMP-PCP binds at the subunit interface with the gamma phosphate coordinated by adjacent subunits. dsDNA probably wraps on the outside of the filament. ssDNA binds to the center of the helical filament via the AAA+ domain, which stretches the DNA.

Its subcellular location is the cytoplasm. Its function is as follows. Plays an essential role in the initiation and regulation of chromosomal replication. ATP-DnaA binds to the origin of replication (oriC) to initiate formation of the DNA replication initiation complex once per cell cycle. Binds the DnaA box (a 9 base pair repeat at the origin) and separates the double-stranded (ds)DNA. Forms a right-handed helical filament on oriC DNA; dsDNA binds to the exterior of the filament while single-stranded (ss)DNA is stabiized in the filament's interior. The ATP-DnaA-oriC complex binds and stabilizes one strand of the AT-rich DNA unwinding element (DUE), permitting loading of DNA polymerase. After initiation quickly degrades to an ADP-DnaA complex that is not apt for DNA replication. Binds acidic phospholipids. Functionally, able to melt short unstable dsDNA (15-mer with melting temperature, TM, 43 degrees Celsius) in the presence of a non-hydrolyzable ATP analog; a more stable dsDNA (20-mer, TM 55 degrees Celsius) is poor substrate. ADP does not support dsDNA melting. Addition of DnaA-AMP-PCP (an ATP analog, beta,gamma-methyleneadenosine 5'-triphosphate) to an oric-containing plasmid causes a DNA shift to more positively supercoiled topological species, stabilizing a positive wrap and right-handed filament as seen in the crystal structure without DNA. Filament formation generated by positive supercoiling may destabilize the origin unwinding element through compensatory negative supercoiling strain. The protein is Chromosomal replication initiator protein DnaA of Aquifex aeolicus (strain VF5).